A 415-amino-acid polypeptide reads, in one-letter code: MFS-type transporter FVEG_12626 (415 aa).

Over residues 1 to 18 (MDPDTEQMRVEKPNHEQP) the composition is skewed to basic and acidic residues. The tract at residues 1–22 (MDPDTEQMRVEKPNHEQPKPNT) is disordered. The next 6 helical transmembrane spans lie at 27 to 47 (GGFKAWSVVVGAFCGLFVGVF), 63 to 83 (TVSWIPAISMFIMFITGPFVG), 93 to 113 (YLLLAGTLLHVFGLMMASISS), 118 to 138 (YILSQAICSPLGAAMVLYPSF), 151 to 171 (LALGITASGSSLGGTILPIVV), and 178 to 198 (IGFGWTMRACAFLLLGLLLVT). Asparagine 199 carries N-linked (GlcNAc...) asparagine glycosylation. Helical transmembrane passes span 227 to 247 (FILTSLAGFFYSMGMFIPITF), 264 to 284 (YLVSIFNASSGIGRILPGYIA), 290 to 310 (FNVSIAAATLSTIFMLGLWLP), 318 to 338 (IAFAALFGFSSGTYTAISPAL), 354 to 374 (TMYAFMSVAALTGSPIGGALI), and 386 to 406 (VFAGCMLGAGTVFYVLARLYI).

Belongs to the major facilitator superfamily. Monocarboxylate porter (TC 2.A.1.13) family.

Its subcellular location is the membrane. In terms of biological role, MFS-type transporter; part of the Fusarium detoxification of benzoxazolinone cluster 2 (FDB2) involved in the degradation of benzoxazolinones produced by the host plant. Maize, wheat, and rye produce the 2 benzoxazinone phytoanticipins 2,4-dihy-droxy-7-methoxy-1,4-benzoxazin-3-one (DIMBOA) and 2,4-dihydroxy-1,4-benzoxazin-3-one (DIBOA) that, due to their inherent instability once released, spontaneously degrade to the more stable corresponding benzoxazolinones, 6-methoxy-2-benzoxazolinone (MBOA) and 2-benzoxazolinone (BOA), respectively. The chain is MFS-type transporter FVEG_12626 from Gibberella moniliformis (strain M3125 / FGSC 7600) (Maize ear and stalk rot fungus).